The chain runs to 130 residues: MVKIQNYGTGRRKSSSARVFLRSGDGEITVNKRSLKDYFGRETSCMVVRQPLELVDMMNNFNIYITVKGGGVSGQAGAIRQGITRALIKYNHLLRSELRKSGFVTRDSRQVERKKVGFRKSRKRTQFSKR.

Residues 105–115 show a composition bias toward basic and acidic residues; it reads TRDSRQVERKK. A disordered region spans residues 105–130; it reads TRDSRQVERKKVGFRKSRKRTQFSKR. The segment covering 116–130 has biased composition (basic residues); that stretch reads VGFRKSRKRTQFSKR.

The protein belongs to the universal ribosomal protein uS9 family.

The sequence is that of Small ribosomal subunit protein uS9 from Buchnera aphidicola subsp. Schizaphis graminum (strain Sg).